The primary structure comprises 449 residues: XK-related protein 2 (449 aa).

Helical transmembrane passes span 35–55 (FSIL…LYMV), 68–88 (TYTF…LIFV), 98–118 (LSLF…EAMI), 174–194 (IQAF…SLIS), 204–224 (LMAF…MLAI), 241–261 (LCIT…LVLF), 269–289 (AVPF…VKFW), 306–326 (VGTL…NFSC), 357–377 (LVEN…VLLN), and 382–402 (LIAV…LLFF).

It belongs to the XK family.

It is found in the membrane. The sequence is that of XK-related protein 2 (Xkrx) from Mus musculus (Mouse).